The following is a 644-amino-acid chain: Biosynthetic arginine decarboxylase (644 aa).

The residue at position 105 (Lys105) is an N6-(pyridoxal phosphate)lysine. 287–297 serves as a coordination point for substrate; the sequence is LDVGGGLGIDY.

This sequence belongs to the Orn/Lys/Arg decarboxylase class-II family. SpeA subfamily. Mg(2+) serves as cofactor. Requires pyridoxal 5'-phosphate as cofactor.

The enzyme catalyses L-arginine + H(+) = agmatine + CO2. In terms of biological role, catalyzes the biosynthesis of agmatine from arginine. The chain is Biosynthetic arginine decarboxylase from Parasynechococcus marenigrum (strain WH8102).